The chain runs to 222 residues: Ribosomal RNA large subunit methyltransferase E (222 aa).

Positions 1–13 (MSRSDKNPHERLK) are enriched in basic and acidic residues. The interval 1 to 22 (MSRSDKNPHERLKTAKKRTASS) is disordered. Positions 75, 77, 94, 110, and 134 each coordinate S-adenosyl-L-methionine. Lysine 174 serves as the catalytic Proton acceptor.

The protein belongs to the class I-like SAM-binding methyltransferase superfamily. RNA methyltransferase RlmE family.

It is found in the cytoplasm. It carries out the reaction uridine(2552) in 23S rRNA + S-adenosyl-L-methionine = 2'-O-methyluridine(2552) in 23S rRNA + S-adenosyl-L-homocysteine + H(+). Specifically methylates the uridine in position 2552 of 23S rRNA at the 2'-O position of the ribose in the fully assembled 50S ribosomal subunit. The protein is Ribosomal RNA large subunit methyltransferase E of Novosphingobium aromaticivorans (strain ATCC 700278 / DSM 12444 / CCUG 56034 / CIP 105152 / NBRC 16084 / F199).